A 28-amino-acid chain; its full sequence is Putative fruR/shl operon leader peptide (28 aa).

This chain is Putative fruR/shl operon leader peptide (fruL), found in Escherichia coli O6:H1 (strain CFT073 / ATCC 700928 / UPEC).